The chain runs to 223 residues: Ribonuclease 3 (223 aa).

The RNase III domain maps to 3 to 125; sequence LERLQKKLSY…IIAAIYLDAG (123 aa). E38 contributes to the Mg(2+) binding site. D42 is a catalytic residue. The Mg(2+) site is built by D111 and E114. E114 is a catalytic residue. The region spanning 152 to 222 is the DRBM domain; that stretch reads DPKTRLQEFL…AEQVLAKLTT (71 aa).

It belongs to the ribonuclease III family. As to quaternary structure, homodimer. The cofactor is Mg(2+).

It localises to the cytoplasm. It catalyses the reaction Endonucleolytic cleavage to 5'-phosphomonoester.. Functionally, digests double-stranded RNA. Involved in the processing of primary rRNA transcript to yield the immediate precursors to the large and small rRNAs (23S and 16S). Processes some mRNAs, and tRNAs when they are encoded in the rRNA operon. Processes pre-crRNA and tracrRNA of type II CRISPR loci if present in the organism. The polypeptide is Ribonuclease 3 (Actinobacillus pleuropneumoniae serotype 5b (strain L20)).